We begin with the raw amino-acid sequence, 690 residues long: Wilms tumor protein 1-interacting protein homolog (690 aa).

Disordered stretches follow at residues 151–316 and 328–372; these read MSAT…VSPR and TLGS…PRSS. Low complexity predominate over residues 152 to 186; it reads SATSPRSSMASSASSSQEHSKYSSPRSSISSNALS. 4 stretches are compositionally biased toward polar residues: residues 204–214, 223–233, 240–261, and 272–292; these read EKYTSPRSSLG, PRSSYASTTSD, PRASLTSYDCGSKPSSNRTSGI, and PRSSTASQYSCTTSPRSSYSD. Residues 335–357 are compositionally biased toward low complexity; it reads SVVSPRSSISSHSSRSSRSSRGS. 3 consecutive LIM zinc-binding domains span residues 479–540, 544–603, and 604–673; these read GICI…SGFQ, DKCF…TVFA, and PKCA…RLSV.

It belongs to the zyxin/ajuba family. Interacts with prickle3.

It localises to the cell junction. It is found in the adherens junction. The protein localises to the nucleus. May monitor slit diaphragm protein assembly, a specialized adherens junction characteristic of podocytes. In case of podocyte injury, it shuttles into the nucleus and acts as a transcription regulator. Plays a role in the regulation of cell morphology and cytoskeletal organization. Acts as a transcriptional corepressor for snai1 and snai2/slug and plays a role in regulating neural crest development. Involved in the organization of the basal body. Involved in cilia growth and positioning. This Xenopus laevis (African clawed frog) protein is Wilms tumor protein 1-interacting protein homolog (wtip).